Consider the following 488-residue polypeptide: Cruciferin (488 aa).

Positions 1–23 (MARLSSLLSFSLALLTFLHGSTA) are cleaved as a signal peptide. 2 disulfides stabilise this stretch: cysteine 30–cysteine 63 and cysteine 105–cysteine 305. 2 Cupin type-1 domains span residues 35 to 262 (LNAL…RTAQ) and 311 to 460 (DNLD…EEAR). Residues 116-163 (QPSGGSPFGEGQGQGQQGQGQGHQGQGQGQQGQQGQQGQQSQGQGFRD) form a disordered region. The span at 121-147 (SPFGEGQGQGQQGQGQGHQGQGQGQQG) shows a compositional bias: gly residues. The span at 148–160 (QQGQQGQQSQGQG) shows a compositional bias: low complexity.

It belongs to the 11S seed storage protein (globulins) family. Hexamer; each subunit is composed of an acidic and a basic chain derived from a single precursor and linked by a disulfide bond.

The protein resides in the rough endoplasmic reticulum. This is a seed storage protein. This is Cruciferin (CRUA) from Brassica napus (Rape).